A 352-amino-acid chain; its full sequence is Cyclin-dependent kinase-like 1 (352 aa).

The region spanning 4-287 (YEKIGKIGEG…CEQLLQHPYF (284 aa)) is the Protein kinase domain. ATP contacts are provided by residues 10 to 18 (IGEGSYGVV) and Lys-33. Residues 45–51 (KKIALRE) carry the [NKR]KIAxRE motif. Catalysis depends on Asp-126, which acts as the Proton acceptor.

Belongs to the protein kinase superfamily. CMGC Ser/Thr protein kinase family. CDC2/CDKX subfamily.

The protein resides in the cytoplasm. It localises to the nucleus. It catalyses the reaction L-seryl-[protein] + ATP = O-phospho-L-seryl-[protein] + ADP + H(+). The enzyme catalyses L-threonyl-[protein] + ATP = O-phospho-L-threonyl-[protein] + ADP + H(+). The sequence is that of Cyclin-dependent kinase-like 1 from Rattus norvegicus (Rat).